Reading from the N-terminus, the 215-residue chain is MRKRISAIIMTLFMVFMSCNNGGPELKSDEVAKSDGTVLDLAKISKKIKDAVEFAASVKEIETLVKSIDELAKTIGQKLTKDTGVLAADANNNNGGLIAGVYGIVTDVGTKLDGLLKVNGISEDIKTKINDSKSKGTAFLSKVKGDDDLCKKDATDAHAKNAIDKNDNTGGKGKTELIALNTAIDELLKAANEAVEAAIKELTAPVKAEKPSQNN.

The first 18 residues, 1-18 (MRKRISAIIMTLFMVFMS), serve as a signal peptide directing secretion. The N-palmitoyl cysteine moiety is linked to residue cysteine 19. A lipid anchor (S-diacylglycerol cysteine) is attached at cysteine 19.

It belongs to the variable small protein (Vsp) family.

The protein resides in the cell outer membrane. The Vlp and Vsp proteins are antigenically distinct proteins, only one vlp or vsp gene is transcriptionally active at any one time. Switching between these genes is a mechanism of host immune response evasion. This Borrelia hermsii protein is Variable small protein 2.